A 404-amino-acid chain; its full sequence is Diphosphomevalonate decarboxylase mvd1 (404 aa).

Residues 25-28, Arg-82, 161-166, and Thr-217 each bind (R)-5-diphosphomevalonate; these read YWGK and SGSACR.

It belongs to the diphosphomevalonate decarboxylase family. Homodimer.

The catalysed reaction is (R)-5-diphosphomevalonate + ATP = isopentenyl diphosphate + ADP + phosphate + CO2. The protein operates within isoprenoid biosynthesis; isopentenyl diphosphate biosynthesis via mevalonate pathway; isopentenyl diphosphate from (R)-mevalonate: step 3/3. Diphosphomevalonate decarboxylase; part of the second module of ergosterol biosynthesis pathway that includes the middle steps of the pathway. Mvd1 converts diphosphomevalonate into isopentenyl diphosphate. The second module is carried out in the vacuole and involves the formation of farnesyl diphosphate, which is also an important intermediate in the biosynthesis of ubiquinone, dolichol, heme and prenylated proteins. Activity by the mevalonate kinase erg12 (AFUA_4G07780) first converts mevalonate into 5-phosphomevalonate. 5-phosphomevalonate is then further converted to 5-diphosphomevalonate by the phosphomevalonate kinase erg8 (AFUA_5G10680). The diphosphomevalonate decarboxylase mvd1 (AFUA_4G07130) then produces isopentenyl diphosphate. The isopentenyl-diphosphate delta-isomerase idi1 (AFUA_6G11160) then catalyzes the 1,3-allylic rearrangement of the homoallylic substrate isopentenyl (IPP) to its highly electrophilic allylic isomer, dimethylallyl diphosphate (DMAPP). Finally the farnesyl diphosphate synthase erg20 (AFUA_5G02450) catalyzes the sequential condensation of isopentenyl pyrophosphate with dimethylallyl pyrophosphate, and then with the resultant geranylpyrophosphate to the ultimate product farnesyl pyrophosphate. In Aspergillus fumigatus (strain ATCC MYA-4609 / CBS 101355 / FGSC A1100 / Af293) (Neosartorya fumigata), this protein is Diphosphomevalonate decarboxylase mvd1.